Reading from the N-terminus, the 55-residue chain is MSTSRKLKTHGMRRGKNRAPHKGVKRGGSKRKYRKSVLKSRKRGDDASRNYRSHL.

A compositionally biased stretch (basic residues) spans 1–42 (MSTSRKLKTHGMRRGKNRAPHKGVKRGGSKRKYRKSVLKSRK). Residues 1-55 (MSTSRKLKTHGMRRGKNRAPHKGVKRGGSKRKYRKSVLKSRKRGDDASRNYRSHL) form a disordered region. Phosphoserine occurs at positions 36 and 40.

The protein belongs to the nuclear transition protein 1 family. In terms of tissue distribution, testis-specific.

The protein resides in the nucleus. It localises to the chromosome. Its function is as follows. Plays a key role in the replacement of histones to protamine in the elongating spermatids of mammals. In condensing spermatids, loaded onto the nucleosomes, where it promotes the recruitment and processing of protamines, which are responsible for histone eviction. The histone H2AB1-H2BC1/TH2B dimer is required for loading of TNP1 onto chromatin. In Mus musculus (Mouse), this protein is Spermatid nuclear transition protein 1.